We begin with the raw amino-acid sequence, 282 residues long: Putative 4-diphosphocytidyl-2-C-methyl-D-erythritol kinase (282 aa).

The active site involves Lys-9. Residue 93–103 (PVSAGLAGGST) coordinates ATP. Asp-135 is an active-site residue.

It belongs to the GHMP kinase family. IspE subfamily.

It carries out the reaction 4-CDP-2-C-methyl-D-erythritol + ATP = 4-CDP-2-C-methyl-D-erythritol 2-phosphate + ADP + H(+). In terms of biological role, catalyzes the phosphorylation of the position 2 hydroxy group of 4-diphosphocytidyl-2C-methyl-D-erythritol. This Staphylococcus saprophyticus subsp. saprophyticus (strain ATCC 15305 / DSM 20229 / NCIMB 8711 / NCTC 7292 / S-41) protein is Putative 4-diphosphocytidyl-2-C-methyl-D-erythritol kinase.